Consider the following 130-residue polypeptide: Putative F-box protein At1g77880 (130 aa).

An F-box domain is found at 18–64 (KVSIPYLPDDLLLNCLARISRLYYPTLSLVSKRFRSLLASTELYETR).

The protein is Putative F-box protein At1g77880 of Arabidopsis thaliana (Mouse-ear cress).